A 38-amino-acid chain; its full sequence is Tyrosinase inhibitor (38 aa).

Intrachain disulfides connect cysteine 11–cysteine 25, cysteine 18–cysteine 29, and cysteine 24–cysteine 36. Tyrosine 32 is subject to 3',4'-dihydroxyphenylalanine.

In terms of assembly, monomer. Contains L-DOPA (3',4'-dihydroxyphenylalanine).

Its subcellular location is the secreted. Potent reversible, competitive inhibitor of tyrosinase (phenol oxidase) in the nanomolar range. The protein is Tyrosinase inhibitor of Musca domestica (House fly).